Here is a 451-residue protein sequence, read N- to C-terminus: Trigger factor (451 aa).

The region spanning 163-248 (GDIIDMEYTV…IKALYANILP (86 aa)) is the PPIase FKBP-type domain.

It belongs to the FKBP-type PPIase family. Tig subfamily.

The protein localises to the cytoplasm. The catalysed reaction is [protein]-peptidylproline (omega=180) = [protein]-peptidylproline (omega=0). Its function is as follows. Involved in protein export. Acts as a chaperone by maintaining the newly synthesized protein in an open conformation. Functions as a peptidyl-prolyl cis-trans isomerase. The sequence is that of Trigger factor from Leptospira interrogans serogroup Icterohaemorrhagiae serovar copenhageni (strain Fiocruz L1-130).